The chain runs to 585 residues: Frizzled-5 (585 aa).

A signal peptide spans 1–26 (MARPDPSAPPSLLLLLLAQLVGRAAA). Residues 27–238 (ASKAPVCQEI…PDERTFATFW (212 aa)) lie on the Extracellular side of the membrane. In terms of domain architecture, FZ spans 28–150 (SKAPVCQEIT…GDAEVLCMDY (123 aa)). 5 disulfide bridges follow: Cys-33–Cys-94, Cys-41–Cys-87, Cys-78–Cys-116, Cys-105–Cys-147, and Cys-109–Cys-133. Asn-47 is a glycosylation site (N-linked (GlcNAc...) asparagine). Asn-151 is a glycosylation site (N-linked (GlcNAc...) asparagine). Positions 156-182 (TTASPKSFPAKPTLPGPPGAPSSGGEC) are disordered. A helical membrane pass occupies residues 239 to 259 (IGLWSVLCFISTSTTVATFLI). The Cytoplasmic portion of the chain corresponds to 260 to 270 (DMERFRYPERP). A helical transmembrane segment spans residues 271-291 (IIFLSACYLCVSLGFLVRLVV). The Extracellular portion of the chain corresponds to 292–315 (GHASVACSREHSHIHYETTGPALC). The chain crosses the membrane as a helical span at residues 316-336 (TVVFLLVYFFGMASSIWWVIL). Residues 337–358 (SLTWFLAAGMKWGNEAIAGYAQ) lie on the Cytoplasmic side of the membrane. The chain crosses the membrane as a helical span at residues 359–379 (YFHLAAWLIPSVKSITALALS). Topologically, residues 380 to 402 (SVDGDPVAGVCYVGNQNLNSLRG) are extracellular. The chain crosses the membrane as a helical span at residues 403 to 423 (FVLGPLVLYLLVGTLFLLAGF). Over 424 to 449 (VSLFRIRSVIKQGGTKTDKLEKLMIR) the chain is Cytoplasmic. A helical transmembrane segment spans residues 450-470 (IGIFTLLYTVPASIVVACYLY). Residues 471–500 (EQHYRESWEAALTCACPGSDAGQPRAKPEY) lie on the Extracellular side of the membrane. A helical transmembrane segment spans residues 501–521 (WVLMLKYFMCLVVGITSGVWI). Over 522–585 (WSGKTLESWR…YHKQVSLSHV (64 aa)) the chain is Cytoplasmic. The Lys-Thr-X-X-X-Trp motif, mediates interaction with the PDZ domain of Dvl family members signature appears at 525 to 530 (KTLESW). Positions 583 to 585 (SHV) match the PDZ-binding motif.

The protein belongs to the G-protein coupled receptor Fz/Smo family. As to quaternary structure, binding of unsaturated fatty acid molecules (via FZ domain) promotes homodimerization (via FZ domain). Interacts with WNT2B. Interacts with WNT7A. Interacts with GOPC. Ubiquitinated by RNF43 and ZNRF3, leading to its degradation by the proteasome.

It localises to the cell membrane. It is found in the golgi apparatus membrane. Its subcellular location is the synapse. The protein resides in the perikaryon. The protein localises to the cell projection. It localises to the dendrite. It is found in the axon. Receptor for Wnt proteins. Functions in the canonical Wnt/beta-catenin signaling pathway. In vitro activates WNT2, WNT10B, WNT5A, but not WNT2B or WNT4 signaling. In neurons, activation by WNT7A promotes formation of synapses. May be involved in transduction and intercellular transmission of polarity information during tissue morphogenesis and/or in differentiated tissues. Plays a role in yolk sac angiogenesis and in placental vascularization. Plays a role in ocular development. The chain is Frizzled-5 (Fzd5) from Rattus norvegicus (Rat).